The primary structure comprises 340 residues: Nesprin-4 (340 aa).

2 disordered regions span residues 1–86 (MAQF…DGGK) and 254–277 (HRRR…DAML). The Cytoplasmic segment spans residues 1–291 (MAQFPLLGHG…GVPAPASRRP (291 aa)). Positions 53–63 (APEHFMDEPKS) are enriched in basic and acidic residues. Residues 283-340 (VPAPASRRPLTFLLLLLFLLLVGATLLLPLSGVPCCSHTRLARTPYLVLSYVNGLPPI) form the KASH domain. A helical; Anchor for type IV membrane protein membrane pass occupies residues 292 to 312 (LTFLLLLLFLLLVGATLLLPL). Residues 313–340 (SGVPCCSHTRLARTPYLVLSYVNGLPPI) are Perinuclear space-facing.

It belongs to the nesprin family. Core component of LINC complexes which are composed of inner nuclear membrane SUN domain-containing proteins coupled to outer nuclear membrane KASH domain-containing nesprins. SUN and KASH domain-containing proteins seem to bind each other promiscuously; however, differentially expression of LINC complex constituents can give rise to specific assemblies. Probably part of a SUN1-containing LINC complex. Interacts with kinesins KIF5B and KLC1.

The protein localises to the nucleus outer membrane. As a component of the LINC (LInker of Nucleoskeleton and Cytoskeleton) complex, involved in the connection between the nuclear lamina and the cytoskeleton. The nucleocytoplasmic interactions established by the LINC complex play an important role in the transmission of mechanical forces across the nuclear envelope and in nuclear movement and positioning. Behaves as a kinesin cargo, providing a functional binding site for kinesin-1 at the nuclear envelope. Hence may contribute to the establishment of secretory epithelial morphology, by promoting kinesin-dependent apical migration of the centrosome and Golgi apparatus and basal localization of the nucleus. This Rattus norvegicus (Rat) protein is Nesprin-4 (Syne4).